A 594-amino-acid chain; its full sequence is Arginine--tRNA ligase (594 aa).

Residues 139 to 149 (ANPTGPLHVGH) carry the 'HIGH' region motif.

The protein belongs to the class-I aminoacyl-tRNA synthetase family. Monomer.

The protein localises to the cytoplasm. It catalyses the reaction tRNA(Arg) + L-arginine + ATP = L-arginyl-tRNA(Arg) + AMP + diphosphate. The polypeptide is Arginine--tRNA ligase (Paraburkholderia phymatum (strain DSM 17167 / CIP 108236 / LMG 21445 / STM815) (Burkholderia phymatum)).